Consider the following 192-residue polypeptide: Adenylate kinase (192 aa).

12-17 (GSGKTT) provides a ligand contact to ATP. The tract at residues 34-63 (STGDLLRAEVASGSELGQTIKSYIDNGNLV) is NMP. Residues Thr35, Arg40, 61 to 63 (NLV), 88 to 91 (GFPR), and Gln95 contribute to the AMP site. Residues 130-136 (GRARGAD) are LID. Residue Arg131 participates in ATP binding. Residues Arg133 and Arg145 each contribute to the AMP site. Position 173 (Arg173) interacts with ATP.

The protein belongs to the adenylate kinase family. In terms of assembly, monomer.

The protein resides in the cytoplasm. It carries out the reaction AMP + ATP = 2 ADP. Its pathway is purine metabolism; AMP biosynthesis via salvage pathway; AMP from ADP: step 1/1. Catalyzes the reversible transfer of the terminal phosphate group between ATP and AMP. Plays an important role in cellular energy homeostasis and in adenine nucleotide metabolism. This is Adenylate kinase from Nautilia profundicola (strain ATCC BAA-1463 / DSM 18972 / AmH).